Here is a 952-residue protein sequence, read N- to C-terminus: Protocadherin-20 (952 aa).

A signal peptide spans 1–60 (MRGRGNARSLLVQAVSLRPATWHPCLDMGHLHRPSSRTSHRNLPHVFLLFLFVGPFNCLA). Residues 61-891 (SYSRATELLY…VESMSCMPTL (831 aa)) lie on the Extracellular side of the membrane. Cadherin domains lie at 64–210 (RATE…APQF), 211–321 (PISE…CPLF), 322–536 (IDSQ…APVF), 537–640 (LQPL…SPRF), 641–743 (INKD…PPLV), and 747–864 (QSNM…EPEI). N-linked (GlcNAc...) asparagine glycosylation is present at asparagine 135. N-linked (GlcNAc...) asparagine glycosylation is found at asparagine 327 and asparagine 333. 5 N-linked (GlcNAc...) asparagine glycosylation sites follow: asparagine 681, asparagine 749, asparagine 804, asparagine 845, and asparagine 850. Residues 892 to 912 (VALSVISLGSITLVTGMGIYI) traverse the membrane as a helical segment. The Cytoplasmic segment spans residues 913–952 (CLRKGKKHHREDDNLEVQIPLKGKIDLCMRERKPVDISNI).

Its subcellular location is the cell membrane. Its function is as follows. Potential calcium-dependent cell-adhesion protein. This is Protocadherin-20 (Pcdh20) from Mus musculus (Mouse).